The chain runs to 629 residues: MDLEKLHDPSLIKSMTKQELEQLAEEIRQFLIEKLSITGGHLGPNLGVVELTLALHSLFDSPKDKLIWDVGHQAYVHKILTGRAGQFDQLRQYKGLCGFPKRDESEHDVWETGHSSTSLSAAMGMATARDLKGTDENVIAIIGDGALTGGMALEALNHIGHEQKDLIVVLNDNEMSIAPNVGALHNVLGRLRTAGKYQKAKEDLEMLIKKIPAFGGKLAQAAERVKDSLKYLLVSGIFFEEMGFTYLGPVDGHDLDDLMENLKYAKKTKGPVLIHVLTKKGKGYAPAENDEKGTWHGVGHYKIESGELVKKPAPPSYSGVFAETLKKIARNDPRIVALTAAMPGGTKLDQFAKEFPDRMFDVGIAEQHATTMAGGLATQGLKPVFAVYSTFLQRGYDQVVHDICRQNLNVFFAIDRAGLVGADGETHQGVFDIAYLRHLPNMKILMPKDENELQHMVYTAIQYEGGPIAVRYPRGNGYGIKMDEVLKEIPIGSWEVLQEGTDACILTFGTMIPVAEQASKELSQQGYSIRLINARSVKPLDEAMLHEIAKSGRPVLTLEETAVQGSFGSAVLEFFHDHGYHNVVTQRMGIPDRFIEHGSVSELLEEIGLTSSQVANQLSKLLPRKQKRA.

Residues histidine 72 and 113–115 (GHS) contribute to the thiamine diphosphate site. Residue aspartate 144 coordinates Mg(2+). Thiamine diphosphate-binding positions include 145 to 146 (GA), asparagine 173, tyrosine 284, and glutamate 366. Asparagine 173 serves as a coordination point for Mg(2+).

Belongs to the transketolase family. DXPS subfamily. As to quaternary structure, homodimer. Requires Mg(2+) as cofactor. Thiamine diphosphate serves as cofactor.

It catalyses the reaction D-glyceraldehyde 3-phosphate + pyruvate + H(+) = 1-deoxy-D-xylulose 5-phosphate + CO2. Its pathway is metabolic intermediate biosynthesis; 1-deoxy-D-xylulose 5-phosphate biosynthesis; 1-deoxy-D-xylulose 5-phosphate from D-glyceraldehyde 3-phosphate and pyruvate: step 1/1. In terms of biological role, catalyzes the acyloin condensation reaction between C atoms 2 and 3 of pyruvate and glyceraldehyde 3-phosphate to yield 1-deoxy-D-xylulose-5-phosphate (DXP). In Halalkalibacterium halodurans (strain ATCC BAA-125 / DSM 18197 / FERM 7344 / JCM 9153 / C-125) (Bacillus halodurans), this protein is 1-deoxy-D-xylulose-5-phosphate synthase.